A 182-amino-acid polypeptide reads, in one-letter code: Ribosome-recycling factor (182 aa).

Belongs to the RRF family.

Its subcellular location is the cytoplasm. Responsible for the release of ribosomes from messenger RNA at the termination of protein biosynthesis. May increase the efficiency of translation by recycling ribosomes from one round of translation to another. The protein is Ribosome-recycling factor of Synechococcus sp. (strain CC9605).